Reading from the N-terminus, the 514-residue chain is Histidine ammonia-lyase (514 aa).

Residues 142 to 144 (ASG) constitute a cross-link (5-imidazolinone (Ala-Gly)). Serine 143 carries the 2,3-didehydroalanine (Ser) modification.

Belongs to the PAL/histidase family. Post-translationally, contains an active site 4-methylidene-imidazol-5-one (MIO), which is formed autocatalytically by cyclization and dehydration of residues Ala-Ser-Gly.

The protein localises to the cytoplasm. The catalysed reaction is L-histidine = trans-urocanate + NH4(+). It participates in amino-acid degradation; L-histidine degradation into L-glutamate; N-formimidoyl-L-glutamate from L-histidine: step 1/3. The protein is Histidine ammonia-lyase of Sorangium cellulosum (strain So ce56) (Polyangium cellulosum (strain So ce56)).